The primary structure comprises 229 residues: Allatostatin-A (229 aa).

The signal sequence occupies residues 1–18; the sequence is MLSTSLPVCFLVIGAALC. Residues 19–48 constitute a propeptide that is removed on maturation; it reads APERMQNDPDPHDSTAQGSDNHSDHIAPLA. Positions 23–46 are disordered; sequence MQNDPDPHDSTAQGSDNHSDHIAP. Leucine amide is present on L58. Residues 62–80 constitute a propeptide that is removed on maturation; it reads AYSYVSEYKRLPVYNFGLG. L90 is subject to Leucine amide. Residues 94–130 constitute a propeptide that is removed on maturation; it reads SVDEDQTNDDQQQIMNNDLDQAALAEFFDQYDDAGYE. Position 140 is a leucine amide (L140). Residues 144–152 constitute a propeptide that is removed on maturation; that stretch reads FADDDTSEE. Residues L162, L173, L184, L196, and L210 each carry the leucine amide modification. Residues 214–229 constitute a propeptide that is removed on maturation; sequence SADDASTEDSDNYFDV.

It belongs to the allatostatin family. In terms of tissue distribution, allatostatin-A-1: Expressed in antennal lobe (AL), corpora cardiaca (CC), corpora allata (CA) and gnathal ganglion (GNG) (at protein level). Expression in AL and GNG detected in most animals, in CC and CA in some animals (at protein level). Allatostatin-A-3: Expressed in antennal lobe (AL), corpora cardiaca (CC), corpora allata (CA) and gnathal ganglion (GNG) (at protein level). Expression in AL detected in all animals, in GNG, CC and CA in most animals (at protein level). Allatostatin-A-4: Expressed in antennal lobe (AL), corpora cardiaca (CC), corpora allata (CA) and gnathal ganglion (GNG) in all animals (at protein level). Allatostatin-A-5: Expressed in antennal lobe (AL), corpora cardiaca (CC), corpora allata (CA) and gnathal ganglion (GNG) in all animals (at protein level). Allatostatin-A-6: Expressed in antennal lobe (AL) and gnathal ganglion (GNG) (at protein level). Expression in AL detected in some animals, in GNG in few animals (at protein level). Not expressed in corpora cardiaca (CC) and corpora allata (CA) (at protein level). Allatostatin-A-7: Expressed in antennal lobe (AL), corpora cardiaca (CC), corpora allata (CA) and gnathal ganglion (GNG) (at protein level). Expression in AL detected in all animals, in GNG, CC and CA in most animals (at protein level). Allatostatin-A-8: Expressed in antennal lobe (AL), corpora cardiaca (CC), corpora allata (CA) and gnathal ganglion (GNG) (at protein level). Expression in AL detected in all animals, in GNG, CC and CA in most animals (at protein level). Allatostatin-A-9: Expressed in antennal lobe (AL), corpora cardiaca (CC), corpora allata (CA) and gnathal ganglion (GNG) (at protein level). Expression in AL detected in all animals, in GNG in most animals and in CC and CA in some animals (at protein level).

Its subcellular location is the secreted. In terms of biological role, neuropeptide inhibitors of juvenile hormone synthesis and gut muscle contraction. The sequence is that of Allatostatin-A from Agrotis ipsilon (Black cutworm moth).